Reading from the N-terminus, the 206-residue chain is Guanylate kinase (206 aa).

One can recognise a Guanylate kinase-like domain in the interval 5–183 (FNLLILSGPS…SKEIILSIAK (179 aa)). An ATP-binding site is contributed by 12–19 (GPSGAGKS).

The protein belongs to the guanylate kinase family.

The protein localises to the cytoplasm. It catalyses the reaction GMP + ATP = GDP + ADP. Its function is as follows. Essential for recycling GMP and indirectly, cGMP. This Helicobacter pylori (strain ATCC 700392 / 26695) (Campylobacter pylori) protein is Guanylate kinase (gmk).